Here is a 172-residue protein sequence, read N- to C-terminus: Signal peptidase complex catalytic subunit sec11 (172 aa).

Residues 1–14 (MLSGLANPRQAAVQ) lie on the Cytoplasmic side of the membrane. The helical; Signal-anchor for type II membrane protein transmembrane segment at 15 to 35 (LMNFGLILSTAFMMWKGISVI) threads the bilayer. Topologically, residues 36 to 172 (TDSPSPIVVV…MGLVVVLQRE (137 aa)) are lumenal. Active-site charge relay system residues include S49 and H90. N-linked (GlcNAc...) asparagine glycosylation occurs at N111. Residue D115 is the Charge relay system of the active site. Positions 158 to 169 (VMLGLMGLVVVL) are C-terminal short (CTS) helix.

Belongs to the peptidase S26B family. Component of the signal peptidase complex (SPC) composed of a catalytic subunit SEC11 and three accessory subunits SPC1, SPC2 and SPC3. The complex induces a local thinning of the ER membrane which is used to measure the length of the signal peptide (SP) h-region of protein substrates. This ensures the selectivity of the complex towards h-regions shorter than 18-20 amino acids. SPC associates with the translocon complex.

The protein resides in the endoplasmic reticulum membrane. The catalysed reaction is Cleavage of hydrophobic, N-terminal signal or leader sequences from secreted and periplasmic proteins.. Its function is as follows. Catalytic component of the signal peptidase complex (SPC) which catalyzes the cleavage of N-terminal signal sequences from nascent proteins as they are translocated into the lumen of the endoplasmic reticulum. Specifically cleaves N-terminal signal peptides that contain a hydrophobic alpha-helix (h-region) shorter than 18-20 amino acids. The chain is Signal peptidase complex catalytic subunit sec11 (sec11) from Neurospora crassa (strain ATCC 24698 / 74-OR23-1A / CBS 708.71 / DSM 1257 / FGSC 987).